Reading from the N-terminus, the 647-residue chain is MINITFPDGAVREFESGVTTFEIAQSISNSLAKKALAGKFNGKLIDTTRAITEDGSIEIVTPDHEDALPILRHSATHLFAQAARRLFPDIHLGVGPAIEDGFYYDTDHTAGQISNEDLPRIEEEMQKIVKENFPSIREEVTKDEAREIFKNDPYKLELIEEHSEDEGGLTIYRQGEYVDLCRGPHVPSTGRIQIFHLLHVAGAYWRGNSDNAMMQRIYGTAWFDKKDLKNYLQMREEAKERDHRKLGKELDLFMISQEVGQGLPFWLPNGATIRRELERYIVNKELVSGYQHVYTPPLASVELYKTSGHWDHYQEDMFPTMDMGDGEEFVLRPMNCPHHIQVFKHHVHSYRELPIRIAEIGMMHRYEKSGALTGLQRVREMSLNDGHLFVTPEQIQEEFQRALQLIIDVYEDFNLTDYRFRLSLRDPQDTHKYFDNDEMWENAQTMLRAALDEMGVDYFEAEGEAAFYGPKLDIQIKTALGKEETLSTIQLDFLLPERFDLKYIGADGEDHRPVMIHRGVISTMERFTAILIENYKGAFPTWLAPHQVTLIPVSNEKHVDYAWEVAKKLRDRGVRADVDERNEKMQFKIRASQTSKIPYQLIVGDKEMEDETVNVRRYGQKETQTVSVDNFVQAILADIANKSRVEK.

The TGS domain occupies 1 to 61; sequence MINITFPDGA…TEDGSIEIVT (61 aa). The tract at residues 242-540 is catalytic; it reads DHRKLGKELD…LIENYKGAFP (299 aa). Positions 336, 387, and 517 each coordinate Zn(2+).

This sequence belongs to the class-II aminoacyl-tRNA synthetase family. In terms of assembly, homodimer. Zn(2+) is required as a cofactor.

The protein localises to the cytoplasm. The catalysed reaction is tRNA(Thr) + L-threonine + ATP = L-threonyl-tRNA(Thr) + AMP + diphosphate + H(+). Catalyzes the attachment of threonine to tRNA(Thr) in a two-step reaction: L-threonine is first activated by ATP to form Thr-AMP and then transferred to the acceptor end of tRNA(Thr). Also edits incorrectly charged L-seryl-tRNA(Thr). This is Threonine--tRNA ligase from Streptococcus pneumoniae serotype 2 (strain D39 / NCTC 7466).